A 241-amino-acid polypeptide reads, in one-letter code: Uridylate kinase (241 aa).

ATP-binding positions include 10-13, Gly53, and Arg57; that span reads KLSG. Residues Asp72 and 133–140 each bind UMP; that span reads AGSPYFST. Asn161, Tyr167, and Asp170 together coordinate ATP.

It belongs to the UMP kinase family. Homohexamer.

It localises to the cytoplasm. It catalyses the reaction UMP + ATP = UDP + ADP. Its pathway is pyrimidine metabolism; CTP biosynthesis via de novo pathway; UDP from UMP (UMPK route): step 1/1. With respect to regulation, inhibited by UTP. Functionally, catalyzes the reversible phosphorylation of UMP to UDP. The polypeptide is Uridylate kinase (Onion yellows phytoplasma (strain OY-M)).